The sequence spans 232 residues: Ubiquinone biosynthesis O-methyltransferase (232 aa).

Residues arginine 36, glycine 55, aspartate 76, and methionine 120 each contribute to the S-adenosyl-L-methionine site.

It belongs to the methyltransferase superfamily. UbiG/COQ3 family.

The enzyme catalyses a 3-demethylubiquinol + S-adenosyl-L-methionine = a ubiquinol + S-adenosyl-L-homocysteine + H(+). It catalyses the reaction a 3-(all-trans-polyprenyl)benzene-1,2-diol + S-adenosyl-L-methionine = a 2-methoxy-6-(all-trans-polyprenyl)phenol + S-adenosyl-L-homocysteine + H(+). It functions in the pathway cofactor biosynthesis; ubiquinone biosynthesis. O-methyltransferase that catalyzes the 2 O-methylation steps in the ubiquinone biosynthetic pathway. The protein is Ubiquinone biosynthesis O-methyltransferase of Burkholderia vietnamiensis (strain G4 / LMG 22486) (Burkholderia cepacia (strain R1808)).